We begin with the raw amino-acid sequence, 184 residues long: Protein GrpE (184 aa).

Acidic residues predominate over residues 1–10 (MTDTPPENEE). Residues 1–22 (MTDTPPENEEQHESNVQNENEV) are disordered.

This sequence belongs to the GrpE family. As to quaternary structure, homodimer.

It localises to the cytoplasm. In terms of biological role, participates actively in the response to hyperosmotic and heat shock by preventing the aggregation of stress-denatured proteins, in association with DnaK and GrpE. It is the nucleotide exchange factor for DnaK and may function as a thermosensor. Unfolded proteins bind initially to DnaJ; upon interaction with the DnaJ-bound protein, DnaK hydrolyzes its bound ATP, resulting in the formation of a stable complex. GrpE releases ADP from DnaK; ATP binding to DnaK triggers the release of the substrate protein, thus completing the reaction cycle. Several rounds of ATP-dependent interactions between DnaJ, DnaK and GrpE are required for fully efficient folding. This chain is Protein GrpE, found in Chlamydia pneumoniae (Chlamydophila pneumoniae).